Reading from the N-terminus, the 481-residue chain is MLLSAPLRHLPGLLLLLWPLLLLPSLAAPGRLARASVRRLGTRVPGGSPGHLSALATSTRAPYSGGRGAGVCKSRPLDLVFIIDSSRSVRPLEFTKVKTFVSRIIDTLDIGATDTRVAVVNYASTVKIEFQLNTYSDKQALKQAVARITPLSTGTMSGLAIQTAMEEAFTVEAGARGPMSNIPKVAIIVTDGRPQDQVNEVAARARASGIELYAVGVDRADMESLKMMASKPLEEHVFYVETYGVIEKLSARFQETFCALDQCMLGTHQCQHVCVSDGDGKHHCECSQGYTLNADGKTCSAIDKCALSTHGCEQICVNDRNGSYHCECYGGYALNADRRTCAALDKCASGTHGCQHICVNDGAGSHHCECFEGYTLNADKKTCSVRNKCALGTHGCQHICVSDGAVAYHCDCFPGYTLNDDKKTCSDIEEARSLISIEDACGCGATLAFQEKVSSHLQKLNTKLDNILKKLKVTEYGQVHR.

Residues 1–27 (MLLSAPLRHLPGLLLLLWPLLLLPSLA) form the signal peptide. The 176-residue stretch at 78–253 (DLVFIIDSSR…GVIEKLSARF (176 aa)) folds into the VWFA domain. Arg193 is modified (omega-N-methylarginine). 4 EGF-like domains span residues 259 to 300 (ALDQ…KTCS), 301 to 342 (AIDK…RTCA), 343 to 384 (ALDK…KTCS), and 385 to 426 (VRNK…KTCS). Intrachain disulfides connect Cys263–Cys274, Cys270–Cys284, Cys286–Cys299, Cys305–Cys316, Cys312–Cys326, Cys328–Cys341, Cys347–Cys358, Cys354–Cys368, Cys370–Cys383, Cys389–Cys400, Cys396–Cys410, and Cys412–Cys425. A glycan (N-linked (GlcNAc...) asparagine) is linked at Asn321. Ser436 is modified (phosphoserine; by FAM20C). The stretch at 451-475 (EKVSSHLQKLNTKLDNILKKLKVTE) forms a coiled coil.

As to quaternary structure, can form homooligomers (monomers, dimers, trimers and tetramers) and heterooligomers with matrilin-1. Interacts with COMP. Component of a complex containing at least CRELD2, MANF, MATN3 and PDIA4. In terms of tissue distribution, strongly expressed in growing skeletal tissue such as epiphyseal growth plate or in bone undergoing growth and remodeling. In the bone, actively synthesized in osteoblasts and osteocytes. Expressed in cartilage of sternum, femur, vertebrae, trachea, articular and epiphyseal cartilage, cartilage of developing bones and bones.

The protein resides in the secreted. Major component of the extracellular matrix of cartilage and may play a role in the formation of extracellular filamentous networks. This chain is Matrilin-3 (Matn3), found in Mus musculus (Mouse).